The chain runs to 99 residues: Malonate decarboxylase acyl carrier protein (99 aa).

Ser-25 carries the O-(phosphoribosyl dephospho-coenzyme A)serine modification.

This sequence belongs to the MdcC family. Post-translationally, covalently binds the prosthetic group of malonate decarboxylase.

The protein resides in the cytoplasm. Functionally, subunit of malonate decarboxylase, it is an acyl carrier protein to which acetyl and malonyl thioester residues are bound via a 2'-(5''-phosphoribosyl)-3'-dephospho-CoA prosthetic group and turn over during the catalytic mechanism. This is Malonate decarboxylase acyl carrier protein from Pseudomonas savastanoi pv. phaseolicola (strain 1448A / Race 6) (Pseudomonas syringae pv. phaseolicola (strain 1448A / Race 6)).